Reading from the N-terminus, the 798-residue chain is Copalyl diphosphate synthase 1, chloroplastic (798 aa).

The transit peptide at Met1 to Ala72 directs the protein to the chloroplast. Lys251 provides a ligand contact to substrate. Residues Asp383 and Asp385 each coordinate Mg(2+). Positions Asp383 to Asp386 match the DXDD motif motif. A substrate-binding site is contributed by Lys469.

The protein belongs to the terpene synthase family. Tpsc subfamily. Requires Mg(2+) as cofactor. Highly expressed in roots, and, at low levels, in stems and leaves.

Its subcellular location is the plastid. It localises to the chloroplast. The enzyme catalyses (2E,6E,10E)-geranylgeranyl diphosphate = (+)-copalyl diphosphate. Its pathway is secondary metabolite biosynthesis; terpenoid biosynthesis. Functionally, involved in the biosynthesis of ent-kaurene diterpenoids natural products such as oridonin, miltiradiene, eriocalyxin B and nezukol, known to exhibit antitumor, anti-inflammatory and antibacterial activities. Catalyzes the conversion of (2E,6E,10E)-geranylgeranyl diphosphate (GGPP) to (+)-copalyl diphosphate ((+)-CPP). This is Copalyl diphosphate synthase 1, chloroplastic from Isodon rubescens (Rabdosia rubescens).